Reading from the N-terminus, the 333-residue chain is Salivary glue protein Sgs-3 (333 aa).

Positions methionine 1–glycine 23 are cleaved as a signal peptide. The tract at residues threonine 51 to cysteine 285 is disordered. Pro residues predominate over residues cysteine 60–arginine 73. Over residues proline 74–proline 88 the composition is skewed to low complexity. Basic residues predominate over residues threonine 89 to threonine 277.

This is Salivary glue protein Sgs-3 (Sgs3) from Drosophila erecta (Fruit fly).